The chain runs to 80 residues: UPF0154 protein SZO_03240 (80 aa).

A helical membrane pass occupies residues 4–24; sequence AIWILLIIVALTAGLFGGIFI.

Belongs to the UPF0154 family.

It localises to the cell membrane. The protein is UPF0154 protein SZO_03240 of Streptococcus equi subsp. zooepidemicus (strain H70).